The primary structure comprises 327 residues: Glycerol-3-phosphate dehydrogenase [NAD(P)+] (327 aa).

NADPH is bound by residues Trp-11, Arg-30, and Lys-103. Positions 103, 131, and 133 each coordinate sn-glycerol 3-phosphate. Ala-135 is an NADPH binding site. The sn-glycerol 3-phosphate site is built by Lys-186, Asp-243, Ser-253, Arg-254, and Asn-255. Lys-186 functions as the Proton acceptor in the catalytic mechanism. Arg-254 contacts NADPH. NADPH-binding residues include Val-281 and Glu-283.

Belongs to the NAD-dependent glycerol-3-phosphate dehydrogenase family.

Its subcellular location is the cytoplasm. The enzyme catalyses sn-glycerol 3-phosphate + NAD(+) = dihydroxyacetone phosphate + NADH + H(+). It carries out the reaction sn-glycerol 3-phosphate + NADP(+) = dihydroxyacetone phosphate + NADPH + H(+). It participates in membrane lipid metabolism; glycerophospholipid metabolism. Functionally, catalyzes the reduction of the glycolytic intermediate dihydroxyacetone phosphate (DHAP) to sn-glycerol 3-phosphate (G3P), the key precursor for phospholipid synthesis. The polypeptide is Glycerol-3-phosphate dehydrogenase [NAD(P)+] (Wolbachia sp. subsp. Drosophila simulans (strain wRi)).